Reading from the N-terminus, the 49-residue chain is MRVKITLACTETGDRNYITTKNKRTNPDRLELKKYSPRLKRHTIHRETK.

Belongs to the bacterial ribosomal protein bL33 family.

The sequence is that of Large ribosomal subunit protein bL33B from Bacillus licheniformis (strain ATCC 14580 / DSM 13 / JCM 2505 / CCUG 7422 / NBRC 12200 / NCIMB 9375 / NCTC 10341 / NRRL NRS-1264 / Gibson 46).